The primary structure comprises 293 residues: uncharacterized protein (293 aa).

Residues 1–58 enclose the HTH lysR-type domain; that stretch reads MDLRRFITLKTVVEEGSFLRASQKLCCTQSTVTFHIQQLEQEFSVQLFEKIGRRMCLT. A DNA-binding region (H-T-H motif) is located at residues 18–37; the sequence is FLRASQKLCCTQSTVTFHIQ.

This sequence belongs to the LysR transcriptional regulatory family.

This is an uncharacterized protein from Escherichia coli (strain K12).